The chain runs to 91 residues: uncharacterized protein (91 aa).

A run of 2 helical transmembrane segments spans residues 5 to 27 (FFKY…TNFQ) and 47 to 69 (DFYH…FIFF).

The protein localises to the cell membrane. This is an uncharacterized protein from Archaeoglobus fulgidus (strain ATCC 49558 / DSM 4304 / JCM 9628 / NBRC 100126 / VC-16).